We begin with the raw amino-acid sequence, 355 residues long: MTLIVEAKQRLDAFSLDAAFTSERGVTALFGRSGSGKTSMIRIIAGLARPDEGRVVLDGEPLTETTTGIFVPKHRRRFGYVFQEARLFPHLSIRANLTYGRWFAARTAHGESFDHIVDLLGIETLLERSPAKLSGGEKQRVAIGRALLSSPRLLLMDEPLAALDDARKAEILPYLERLRDETDIPIVYVSHSIAEVARLANQVVVMRDGKVEATGPAIDILSRPSTASDRREAGALLEGTVESFDARHHLSTVALKSCQVHIPGAALAPGKSVRIRIPSRDVMLATTRPEGLSALNILEARIDGMSSTEDGTVEIRLDCGGDIILSRITTLSCERLDLRQGRAIFAIIKTVALEA.

The 233-residue stretch at 1–233 folds into the ABC transporter domain; the sequence is MTLIVEAKQR…PSTASDRREA (233 aa). 31 to 38 serves as a coordination point for ATP; it reads GRSGSGKT. Positions 291–355 constitute a Mop domain; it reads GLSALNILEA…AIIKTVALEA (65 aa).

The protein belongs to the ABC transporter superfamily. Molybdate importer (TC 3.A.1.8) family. As to quaternary structure, the complex is composed of two ATP-binding proteins (ModC), two transmembrane proteins (ModB) and a solute-binding protein (ModA).

Its subcellular location is the cell inner membrane. It carries out the reaction molybdate(out) + ATP + H2O = molybdate(in) + ADP + phosphate + H(+). Part of the ABC transporter complex ModABC involved in molybdenum import. Responsible for energy coupling to the transport system. This chain is Molybdenum import ATP-binding protein ModC, found in Rhizobium johnstonii (strain DSM 114642 / LMG 32736 / 3841) (Rhizobium leguminosarum bv. viciae).